A 338-amino-acid chain; its full sequence is Glyceraldehyde-3-phosphate dehydrogenase (338 aa).

Residues 12–13 (RI), Asp-38, and Ser-125 each bind NAD(+). D-glyceraldehyde 3-phosphate is bound by residues 155-157 (SCT), Thr-186, 216-217 (TG), and Arg-239. Cys-156 acts as the Nucleophile in catalysis. An NAD(+)-binding site is contributed by Asn-320.

It belongs to the glyceraldehyde-3-phosphate dehydrogenase family. As to quaternary structure, homotetramer.

Its subcellular location is the cytoplasm. The catalysed reaction is D-glyceraldehyde 3-phosphate + phosphate + NAD(+) = (2R)-3-phospho-glyceroyl phosphate + NADH + H(+). It participates in carbohydrate degradation; glycolysis; pyruvate from D-glyceraldehyde 3-phosphate: step 1/5. Functionally, catalyzes the oxidative phosphorylation of glyceraldehyde 3-phosphate (G3P) to 1,3-bisphosphoglycerate (BPG) using the cofactor NAD. The first reaction step involves the formation of a hemiacetal intermediate between G3P and a cysteine residue, and this hemiacetal intermediate is then oxidized to a thioester, with concomitant reduction of NAD to NADH. The reduced NADH is then exchanged with the second NAD, and the thioester is attacked by a nucleophilic inorganic phosphate to produce BPG. This chain is Glyceraldehyde-3-phosphate dehydrogenase (gap), found in Lactobacillus delbrueckii subsp. bulgaricus.